The following is a 272-amino-acid chain: Phosphoglycolate phosphatase (272 aa).

Catalysis depends on aspartate 19, which acts as the Nucleophile. Mg(2+) contacts are provided by aspartate 19, aspartate 21, and aspartate 182.

It belongs to the HAD-like hydrolase superfamily. CbbY/CbbZ/Gph/YieH family. It depends on Mg(2+) as a cofactor.

The catalysed reaction is 2-phosphoglycolate + H2O = glycolate + phosphate. It functions in the pathway organic acid metabolism; glycolate biosynthesis; glycolate from 2-phosphoglycolate: step 1/1. In terms of biological role, specifically catalyzes the dephosphorylation of 2-phosphoglycolate. Is involved in the dissimilation of the intracellular 2-phosphoglycolate formed during the DNA repair of 3'-phosphoglycolate ends, a major class of DNA lesions induced by oxidative stress. In Pseudomonas fluorescens (strain ATCC BAA-477 / NRRL B-23932 / Pf-5), this protein is Phosphoglycolate phosphatase.